The primary structure comprises 495 residues: Bifunctional protein GlmU (495 aa).

Residues 1–241 are pyrophosphorylase; sequence MPQQTAVVVL…AAKVTGVNDR (241 aa). UDP-N-acetyl-alpha-D-glucosamine-binding positions include 10–13, K24, Q81, and 86–87; these read LAAG and GT. Position 112 (D112) interacts with Mg(2+). Residues G151, E166, N181, and N239 each contribute to the UDP-N-acetyl-alpha-D-glucosamine site. N239 is a Mg(2+) binding site. Residues 242–262 form a linker region; that stretch reads VQLSIATRTMNRYILERHMRA. The N-acetyltransferase stretch occupies residues 263-495; sequence GVTIIDPAST…QATEQKDGEQ (233 aa). The UDP-N-acetyl-alpha-D-glucosamine site is built by R344 and K362. H374 serves as the catalytic Proton acceptor. Positions 377 and 388 each coordinate UDP-N-acetyl-alpha-D-glucosamine. Residues A391, 397–398, S416, and A434 each bind acetyl-CoA; that span reads NY. Residues 467–495 form a disordered region; sequence GTAAATAAAQALAADEKSSQATEQKDGEQ. A compositionally biased stretch (low complexity) spans 468 to 479; it reads TAAATAAAQALA. Residues 480-495 show a composition bias toward basic and acidic residues; sequence ADEKSSQATEQKDGEQ.

It in the N-terminal section; belongs to the N-acetylglucosamine-1-phosphate uridyltransferase family. In the C-terminal section; belongs to the transferase hexapeptide repeat family. Homotrimer. Mg(2+) is required as a cofactor.

Its subcellular location is the cytoplasm. It catalyses the reaction alpha-D-glucosamine 1-phosphate + acetyl-CoA = N-acetyl-alpha-D-glucosamine 1-phosphate + CoA + H(+). The enzyme catalyses N-acetyl-alpha-D-glucosamine 1-phosphate + UTP + H(+) = UDP-N-acetyl-alpha-D-glucosamine + diphosphate. It functions in the pathway nucleotide-sugar biosynthesis; UDP-N-acetyl-alpha-D-glucosamine biosynthesis; N-acetyl-alpha-D-glucosamine 1-phosphate from alpha-D-glucosamine 6-phosphate (route II): step 2/2. The protein operates within nucleotide-sugar biosynthesis; UDP-N-acetyl-alpha-D-glucosamine biosynthesis; UDP-N-acetyl-alpha-D-glucosamine from N-acetyl-alpha-D-glucosamine 1-phosphate: step 1/1. It participates in bacterial outer membrane biogenesis; LPS lipid A biosynthesis. Catalyzes the last two sequential reactions in the de novo biosynthetic pathway for UDP-N-acetylglucosamine (UDP-GlcNAc). The C-terminal domain catalyzes the transfer of acetyl group from acetyl coenzyme A to glucosamine-1-phosphate (GlcN-1-P) to produce N-acetylglucosamine-1-phosphate (GlcNAc-1-P), which is converted into UDP-GlcNAc by the transfer of uridine 5-monophosphate (from uridine 5-triphosphate), a reaction catalyzed by the N-terminal domain. The polypeptide is Bifunctional protein GlmU (Nocardia farcinica (strain IFM 10152)).